A 343-amino-acid polypeptide reads, in one-letter code: Holliday junction branch migration complex subunit RuvB (343 aa).

Residues 4 to 193 (TDNLTAAQPQ…FGIVSRLEFY (190 aa)) form a large ATPase domain (RuvB-L) region. ATP is bound by residues Leu32, Arg33, Gly74, Lys77, Thr78, Thr79, 140–142 (EDY), Arg183, Tyr193, and Arg230. A Mg(2+)-binding site is contributed by Thr78. The small ATPAse domain (RuvB-S) stretch occupies residues 194 to 264 (ENRDLATIVS…IADAALSMLD (71 aa)). The tract at residues 267–343 (VQGLDVMDRK…YLHFGLPVEK (77 aa)) is head domain (RuvB-H). DNA contacts are provided by Arg322 and Arg327.

Belongs to the RuvB family. In terms of assembly, homohexamer. Forms an RuvA(8)-RuvB(12)-Holliday junction (HJ) complex. HJ DNA is sandwiched between 2 RuvA tetramers; dsDNA enters through RuvA and exits via RuvB. An RuvB hexamer assembles on each DNA strand where it exits the tetramer. Each RuvB hexamer is contacted by two RuvA subunits (via domain III) on 2 adjacent RuvB subunits; this complex drives branch migration. In the full resolvosome a probable DNA-RuvA(4)-RuvB(12)-RuvC(2) complex forms which resolves the HJ.

Its subcellular location is the cytoplasm. The enzyme catalyses ATP + H2O = ADP + phosphate + H(+). In terms of biological role, the RuvA-RuvB-RuvC complex processes Holliday junction (HJ) DNA during genetic recombination and DNA repair, while the RuvA-RuvB complex plays an important role in the rescue of blocked DNA replication forks via replication fork reversal (RFR). RuvA specifically binds to HJ cruciform DNA, conferring on it an open structure. The RuvB hexamer acts as an ATP-dependent pump, pulling dsDNA into and through the RuvAB complex. RuvB forms 2 homohexamers on either side of HJ DNA bound by 1 or 2 RuvA tetramers; 4 subunits per hexamer contact DNA at a time. Coordinated motions by a converter formed by DNA-disengaged RuvB subunits stimulates ATP hydrolysis and nucleotide exchange. Immobilization of the converter enables RuvB to convert the ATP-contained energy into a lever motion, pulling 2 nucleotides of DNA out of the RuvA tetramer per ATP hydrolyzed, thus driving DNA branch migration. The RuvB motors rotate together with the DNA substrate, which together with the progressing nucleotide cycle form the mechanistic basis for DNA recombination by continuous HJ branch migration. Branch migration allows RuvC to scan DNA until it finds its consensus sequence, where it cleaves and resolves cruciform DNA. This is Holliday junction branch migration complex subunit RuvB from Neisseria meningitidis serogroup A / serotype 4A (strain DSM 15465 / Z2491).